The sequence spans 576 residues: Putative export ATP-binding/permease protein RT0691 (576 aa).

An ABC transmembrane type-1 domain is found at 20 to 303 (LIIVMISLLS…IFELLSEIHL (284 aa)). 6 consecutive transmembrane segments (helical) span residues 21–41 (IIVM…GSVF), 61–81 (ILYI…RSYF), 135–155 (FLSF…LMFF), 158–178 (FKLA…LIKF), 242–262 (ALFF…IVWI), and 277–297 (IISF…IFEL). An ABC transporter domain is found at 336 to 572 (IEFKNVDFTY…SEIYRNICRE (237 aa)). ATP is bound at residue 371 to 378 (GRSGAGKS).

Belongs to the ABC transporter superfamily. In terms of assembly, homodimer.

It localises to the cell inner membrane. Functionally, part of an ABC transporter complex. Transmembrane domains (TMD) form a pore in the inner membrane and the ATP-binding domain (NBD) is responsible for energy generation. The protein is Putative export ATP-binding/permease protein RT0691 of Rickettsia typhi (strain ATCC VR-144 / Wilmington).